The sequence spans 1004 residues: ABC transporter G family member 25 (1004 aa).

The first 27 residues, 1–27 (MAASQLLAAAVAAAVFLAALLVPPARC), serve as a signal peptide directing secretion. The chain crosses the membrane as a helical span at residues 271 to 291 (ATALFGGILIVILSVVLLLVY). Residues 343 to 373 (SDQLAASSNEARHATEGNGKRSKNRKKLAHA) form a disordered region. A compositionally biased stretch (basic and acidic residues) spans 352-361 (EARHATEGNG). Basic residues predominate over residues 362-372 (KRSKNRKKLAH). Residues 419–659 (VVFKGLTLSI…FSSLGIKVPE (241 aa)) form the ABC transporter domain. 451–458 (GPSGAGKT) provides a ligand contact to ATP. 6 consecutive transmembrane segments (helical) span residues 776–796 (ATLQ…IGTI), 804–824 (FGVA…QLAA), 886–906 (LVFL…AIWF), 907–927 (ELGL…LVGT), 943–963 (WALE…WLIT), and 978–998 (FVLC…IALL).

It belongs to the ABC transporter superfamily. ABCG family. Eye pigment precursor importer (TC 3.A.1.204) subfamily.

Its subcellular location is the membrane. This chain is ABC transporter G family member 25, found in Oryza sativa subsp. japonica (Rice).